The chain runs to 685 residues: Mesothelin-like protein (685 aa).

The N-terminal stretch at 1–32 is a signal peptide; that stretch reads MSRTLRPSAMGSRVGALASPGLALLLSLTAHC. Residues 33–627 lie on the Extracellular side of the membrane; that stretch reads SGPQAKGLPK…GVSHTSGSPP (595 aa). 2 N-linked (GlcNAc...) asparagine glycosylation sites follow: asparagine 315 and asparagine 400. The disordered stretch occupies residues 603-624; it reads PPSSLIHSLDPPGNDGVSHTSG. A helical transmembrane segment spans residues 628–648; the sequence is VHLGYLSLAVALPSSLLWLLL. Topologically, residues 649–685 are cytoplasmic; the sequence is CQLPSGQMATAHRTLGPMALAQGSWTPEHQIPEKRSC.

Belongs to the mesothelin family.

Its subcellular location is the membrane. Its function is as follows. May play a role in cellular adhesion. In Mus musculus (Mouse), this protein is Mesothelin-like protein (Mslnl).